Consider the following 194-residue polypeptide: Large ribosomal subunit protein bL27c (194 aa).

The transit peptide at 1-57 (MAVTTSMSFNLMASFRGMSLSSSSSSSFFKGEFGPSSLRLPNKSPLSVSPFPLTIES) directs the protein to the chloroplast. The disordered stretch occupies residues 57–76 (SAHKKGAGSTKNGRDSKGQR).

In terms of assembly, component of the chloroplast large ribosomal subunit (LSU). Mature 70S chloroplast ribosomes of higher plants consist of a small (30S) and a large (50S) subunit. The 30S small subunit contains 1 molecule of ribosomal RNA (16S rRNA) and 24 different proteins. The 50S large subunit contains 3 rRNA molecules (23S, 5S and 4.5S rRNA) and 33 different proteins.

The protein localises to the plastid. It localises to the chloroplast. Functionally, component of the chloroplast ribosome (chloro-ribosome), a dedicated translation machinery responsible for the synthesis of chloroplast genome-encoded proteins, including proteins of the transcription and translation machinery and components of the photosynthetic apparatus. The chain is Large ribosomal subunit protein bL27c (RPL27) from Spinacia oleracea (Spinach).